We begin with the raw amino-acid sequence, 870 residues long: Large structural phosphoprotein (870 aa).

The segment covering 612–649 (NDRDVLRGGKGNSKDLHSGGNAKKKEMSGKFNDDKEMT) has biased composition (basic and acidic residues). Disordered stretches follow at residues 612-662 (NDRD…LMGD) and 840-870 (QDGE…AIAS).

Belongs to the herpesviridae large structural phosphoprotein family. Post-translationally, phosphorylated at multiple sites.

It is found in the virion tegument. The chain is Large structural phosphoprotein (U11) from Human herpesvirus 6A (strain Uganda-1102) (HHV-6 variant A).